A 266-amino-acid chain; its full sequence is Norfluorocurarine synthase 1 (266 aa).

The 111-residue stretch at 11–121 (HFVLVHGAGH…VMPDAVNPPS (111 aa)) folds into the AB hydrolase-1 domain. Catalysis depends on residues Ser-86, Asp-216, and His-244.

It belongs to the AB hydrolase superfamily. As to quaternary structure, homodimer.

The enzyme catalyses 17-dehydropreakuammicine + H2O = norfluorocurarine + methanol + CO2. Its pathway is alkaloid biosynthesis. Its function is as follows. Hydrolase involved in the biosynthesis of curare monoterpene indole alkaloids (MIAs), natural products such as diaboline, a pharmacologically active compound used to regulate blood pressure. Curare alkaloids act as animal glycine receptor antagonists. Catalyzes the conversion of dehydropreakuammicine to norfluorocurarine. This Strychnos sp protein is Norfluorocurarine synthase 1.